An 83-amino-acid polypeptide reads, in one-letter code: Turripeptide Lol11.1 (83 aa).

Positions M1–T27 are cleaved as a signal peptide.

It belongs to the conopeptide I2-like superfamily. Contains 4 disulfide bonds. As to expression, expressed by the venom duct.

It is found in the secreted. Acts as a neurotoxin by inhibiting voltage-gated potassium channels (Kv). The protein is Turripeptide Lol11.1 of Iotyrris olangoensis (Sea snail).